Here is a 320-residue protein sequence, read N- to C-terminus: tRNA U34 carboxymethyltransferase (320 aa).

Carboxy-S-adenosyl-L-methionine is bound by residues Lys-89, Trp-103, Lys-108, Gly-128, 150–152 (DPT), 179–180 (IE), Met-194, Tyr-198, and Arg-313.

It belongs to the class I-like SAM-binding methyltransferase superfamily. CmoB family. Homotetramer.

It carries out the reaction carboxy-S-adenosyl-L-methionine + 5-hydroxyuridine(34) in tRNA = 5-carboxymethoxyuridine(34) in tRNA + S-adenosyl-L-homocysteine + H(+). Catalyzes carboxymethyl transfer from carboxy-S-adenosyl-L-methionine (Cx-SAM) to 5-hydroxyuridine (ho5U) to form 5-carboxymethoxyuridine (cmo5U) at position 34 in tRNAs. This chain is tRNA U34 carboxymethyltransferase, found in Glaesserella parasuis serovar 5 (strain SH0165) (Haemophilus parasuis).